The chain runs to 270 residues: Hydroxyethylthiazole kinase (270 aa).

Met-47 is a substrate binding site. Residues Arg-123 and Thr-169 each coordinate ATP. Gly-196 is a binding site for substrate.

The protein belongs to the Thz kinase family. Requires Mg(2+) as cofactor.

It catalyses the reaction 5-(2-hydroxyethyl)-4-methylthiazole + ATP = 4-methyl-5-(2-phosphooxyethyl)-thiazole + ADP + H(+). It participates in cofactor biosynthesis; thiamine diphosphate biosynthesis; 4-methyl-5-(2-phosphoethyl)-thiazole from 5-(2-hydroxyethyl)-4-methylthiazole: step 1/1. Functionally, catalyzes the phosphorylation of the hydroxyl group of 4-methyl-5-beta-hydroxyethylthiazole (THZ). The sequence is that of Hydroxyethylthiazole kinase from Roseiflexus sp. (strain RS-1).